We begin with the raw amino-acid sequence, 156 residues long: FUN14 domain-containing protein 1 (156 aa).

The YXXL signature appears at 19–22; the sequence is YEVL. 3 helical membrane-spanning segments follow: residues 49–69, 76–96, and 135–155; these read YSVA…GFLF, AATA…SGYV, and FIKQ…LGLA.

It belongs to the FUN14 family.

The protein resides in the mitochondrion outer membrane. Acts as an activator of hypoxia-induced mitophagy, an important mechanism for mitochondrial quality control. The polypeptide is FUN14 domain-containing protein 1 (FUNDC1) (Gallus gallus (Chicken)).